The primary structure comprises 522 residues: Anti-sigma-I factor RsgI4 (522 aa).

The Cytoplasmic portion of the chain corresponds to 1–51; the sequence is MNLGVVIKIKRKKAIIVTETGEFKAVNARNGMFLGQKILFDQQDVIENNRN. Positions 2–49 constitute a RsgI N-terminal anti-sigma domain; sequence NLGVVIKIKRKKAIIVTETGEFKAVNARNGMFLGQKILFDQQDVIENN. A helical membrane pass occupies residues 52–72; that stretch reads GIGLAYSAAIAGMVAVFVFMF. Over 73-522 the chain is Extracellular; the sequence is TYFGLHNFNG…SGILKWGREP (450 aa). A compositionally biased stretch (low complexity) spans 311-361; sequence SAKTPERATTVPVNTPVKPTDAPTKSPATATATATRAPVKATATPAKTLKP. The disordered stretch occupies residues 311–371; the sequence is SAKTPERATT…SDTPVKTPDG (61 aa). A CBM3 domain is found at 371–522; it reads GEQSVKVRFY…SGILKWGREP (152 aa).

In terms of assembly, interacts (via RsgI N-terminal anti-sigma domain) with SigI4.

Its subcellular location is the cell membrane. Anti-sigma factor for SigI4. Negatively regulates SigI4 activity through direct interaction. Binding of the polysaccharide substrate to the extracellular C-terminal sensing domain of RsgI4 may induce a conformational change in its N-terminal cytoplasmic region, leading to the release and activation of SigI4. The chain is Anti-sigma-I factor RsgI4 from Acetivibrio thermocellus (strain ATCC 27405 / DSM 1237 / JCM 9322 / NBRC 103400 / NCIMB 10682 / NRRL B-4536 / VPI 7372) (Clostridium thermocellum).